Consider the following 386-residue polypeptide: uncharacterized protein (386 aa).

Residues 29–76 (KYWKFLNEDCKIEVLKYLDYCSRCQLSICSKSDHKLVSITPLYVYEIE) form the F-box domain.

This is an uncharacterized protein from Caenorhabditis elegans.